Reading from the N-terminus, the 270-residue chain is Putative pyruvate, phosphate dikinase regulatory protein 2 (270 aa).

Position 151 to 158 (151 to 158 (GVSRTSKT)) interacts with ADP.

Belongs to the pyruvate, phosphate/water dikinase regulatory protein family. PDRP subfamily.

It catalyses the reaction N(tele)-phospho-L-histidyl/L-threonyl-[pyruvate, phosphate dikinase] + ADP = N(tele)-phospho-L-histidyl/O-phospho-L-threonyl-[pyruvate, phosphate dikinase] + AMP + H(+). It carries out the reaction N(tele)-phospho-L-histidyl/O-phospho-L-threonyl-[pyruvate, phosphate dikinase] + phosphate + H(+) = N(tele)-phospho-L-histidyl/L-threonyl-[pyruvate, phosphate dikinase] + diphosphate. Functionally, bifunctional serine/threonine kinase and phosphorylase involved in the regulation of the pyruvate, phosphate dikinase (PPDK) by catalyzing its phosphorylation/dephosphorylation. The chain is Putative pyruvate, phosphate dikinase regulatory protein 2 from Listeria welshimeri serovar 6b (strain ATCC 35897 / DSM 20650 / CCUG 15529 / CIP 8149 / NCTC 11857 / SLCC 5334 / V8).